The following is a 650-amino-acid chain: Epithelial sodium channel subunit gamma (650 aa).

Topologically, residues 1–55 are cytoplasmic; the sequence is MAPGEKIKAKIKKNLPVRGPQAPTIKDLMHWYCMNTNTHGCRRIVVSRGRLRRLL. Residues 56–76 form a helical membrane-spanning segment; it reads WIAFTLTAVALIIWQCALLVF. The Extracellular segment spans residues 77-542; that stretch reads SFYTVSVSIK…GGQLGLWMSC (466 aa). Disulfide bonds link cysteine 100/cysteine 284, cysteine 208/cysteine 215, cysteine 261/cysteine 268, cysteine 373/cysteine 458, cysteine 395/cysteine 454, cysteine 399/cysteine 450, cysteine 408/cysteine 435, and cysteine 410/cysteine 424. A gating release of inhibition by proteolysis (GRIP); protease-sensitive region that is responsible for the proteolytic activation of the channel region spans residues 135-222; sequence RKRREAGSMP…SDCATYTFSS (88 aa). An N-linked (GlcNAc...) asparagine glycan is attached at asparagine 210. Asparagine 272 is a glycosylation site (N-linked (GlcNAc...) asparagine). The N-linked (GlcNAc...) asparagine glycan is linked to asparagine 498. Residues 543–563 traverse the membrane as a helical segment; sequence SVVCVIEIIEVFFIDFFSIIA. The Cytoplasmic segment spans residues 564–650; that stretch reads RRQWHKAKDW…LTDTQLTNEL (87 aa). The interval 577–628 is disordered; the sequence is RQTPPSTETPSSRQGQDNPALDTDDDLPTFTSAMRLPPAPGSTVPGTPPPRY. Positions 579–593 are enriched in polar residues; it reads TPPSTETPSSRQGQD. The PY motif; mediates interaction, ubiquitination and inhibition by NEDD4 and NEDD4L motif lies at 624–628; that stretch reads PPPRY. Residues 624 to 628 carry the PY motif; recruits WW domain-containing proteins and is thereby required for ubiquitination and inhibition of the channel by NEDD4 and NEDD4L motif; the sequence is PPPRY.

The protein belongs to the amiloride-sensitive sodium channel (TC 1.A.6) family. SCNN1G subfamily. In terms of assembly, component of the heterotrimeric epithelial sodium channel (ENaC) composed of an alpha/SCNN1A, a beta/SCNN1B and a gamma/SCNN1G subunit. Interacts with WWP1 (via WW domains). Interacts with WWP2 (via WW domains); inhibits the channel. Interacts with the full-length immature form of PCSK9 (pro-PCSK9); inhibits ENaC by promoting its proteasomal degradation. Interacts with BPIFA1; the interaction is indirect via SCNN1B and inhibits the proteolytic maturation of SCNN1A and SCNN1G and the activation of ENaC. Post-translationally, phosphorylated on serine and threonine residues. Aldosterone and insulin increase the basal level of phosphorylation. Ubiquitinated. Can be ubiquitinated at multiple sites and undergo monoubiquitination and polyubiquitination. Ubiquitination by NEDD4 or NEDD4L inhibits the ENaC channel through endocytosis, intracellular retention and degradation of its individual subunits. In terms of processing, ENaC is activated through the proteolytic maturation of its subunits. Furin cleaves the SCNN1G subunit first, followed by cleavage by prostasin (PRSS8), which results in a stepwise increase in the open probability of the channel due to the release of an inhibitory tract. BPIFA1, which is recruited by the SCNN1B subunit, prevents the proteolytic activation of ENaC. Post-translationally, N-glycosylated. N-linked glycans are processed to complex type during ENaC complex assembly and transport to the plasma membrane.

Its subcellular location is the apical cell membrane. It carries out the reaction Na(+)(in) = Na(+)(out). Its activity is regulated as follows. Originally identified and characterized by its inhibition by the diuretic drug amiloride. Its function is as follows. This is one of the three pore-forming subunits of the heterotrimeric epithelial sodium channel (ENaC), a critical regulator of sodium balance and fluid homeostasis. ENaC operates in epithelial tissues, where it mediates the electrodiffusion of sodium ions from extracellular fluid through the apical membrane of cells, with water following osmotically. It plays a key role in maintaining sodium homeostasis through electrogenic sodium reabsorption in the kidneys. Additionally, ENaC is essential for airway surface liquid homeostasis, which is crucial for proper mucus clearance. In Rattus norvegicus (Rat), this protein is Epithelial sodium channel subunit gamma.